Here is a 641-residue protein sequence, read N- to C-terminus: WW domain-binding protein 11 (641 aa).

A compositionally biased stretch (polar residues) spans 1–11 (MGRRSTSSTKS). The segment at 1-37 (MGRRSTSSTKSGKFMNPTDQARKEARKRELKKNKKQR) is disordered. The required for nuclear import stretch occupies residues 1-45 (MGRRSTSSTKSGKFMNPTDQARKEARKRELKKNKKQRMMVRAAVL). An N6-acetyllysine modification is found at lysine 13. The span at 28 to 37 (RELKKNKKQR) shows a compositional bias: basic residues. Positions 75 to 133 (EKVLKDKRKKLRETFERILRLYEKENPDIYKELRKLEVEYEQKRAQLSQYFDAVKNAQH) form a coiled coil. Serine 181 carries the phosphoserine modification. A disordered region spans residues 188–213 (HGVPRLPPGRKPPGPPPGPPPPQVLQ). Position 192 is an omega-N-methylarginine (arginine 192). Residues 192–210 (RLPPGRKPPGPPPGPPPPQ) show a composition bias toward pro residues. The segment at 217 to 221 (RKVGF) is interaction with PP1. Phosphotyrosine is present on tyrosine 236. The tract at residues 236–550 (YSPELAQRGH…IQRPKADDAS (315 aa)) is disordered. A Phosphoserine modification is found at serine 237. Positions 253–263 (SEDDGYPEDMD) are enriched in acidic residues. Residues 276 to 304 (TDRSDAESDGDEFGHREDSERDNTEEKKS) show a composition bias toward basic and acidic residues. Phosphoserine occurs at positions 279 and 283. The segment at 306–310 (LSVRF) is interaction with PP1. Over residues 351-365 (EFSEEEDADDSDDSE) the composition is skewed to acidic residues. Residues serine 353, serine 361, and serine 364 each carry the phosphoserine modification. A compositionally biased stretch (basic and acidic residues) spans 366-380 (AEKQSQKQHKDDGHS). The span at 381–404 (DSTAAASSQQQAPPQSAPASQIQA) shows a compositional bias: low complexity. Composition is skewed to pro residues over residues 405-447 (PPMP…PPGM), 456-504 (RLLP…PPRP), and 510-530 (PLVP…PLPN). The short motif at 455 to 466 (PRLLPPGPPPGR) is the PGR element. Lysine 557 participates in a covalent cross-link: Glycyl lysine isopeptide (Lys-Gly) (interchain with G-Cter in SUMO2). Lysine 565 carries the N6-acetyllysine modification. A Glycyl lysine isopeptide (Lys-Gly) (interchain with G-Cter in SUMO2) cross-link involves residue lysine 572. The disordered stretch occupies residues 588-620 (ENKGATAVPQRRSEDDSAVPVAKAAPRSGPSVA). Serine 600 carries the post-translational modification Phosphoserine. A required for nuclear export region spans residues 633–641 (FMKEMEGLL).

In terms of assembly, interacts via the PGR motif with PQBP1 in the nucleus. Interacts with the WW domains of WBP4. Interacts with PPP1CA, PPP1CB and PPP1CC. In terms of tissue distribution, ubiquitously expressed, with highest levels in testis.

The protein localises to the nucleus. The protein resides in the cytoplasm. Functionally, activates pre-mRNA splicing. May inhibit PP1 phosphatase activity. This Mus musculus (Mouse) protein is WW domain-binding protein 11 (Wbp11).